Reading from the N-terminus, the 99-residue chain is Carboxysome shell vertex protein CcmL (99 aa).

The region spanning 1–83 (MKIARVCGTV…IDAAVVAIID (83 aa)) is the BMV domain.

This sequence belongs to the CcmL/EutN family. CcmL subfamily. As to quaternary structure, homopentamer. May interact with CcmK2, this occurs at very high CcmK2 concentrations. Interacts with full-length CcmM.

The protein localises to the carboxysome. Probably forms vertices in the carboxysome, a polyhedral inclusion where RuBisCO (ribulose bisphosphate carboxylase, rbcL-rbcS) is sequestered. Has been modeled to induce curvature upon insertion into an otherwise flat hexagonal molecular layer of CcmK subunits. This chain is Carboxysome shell vertex protein CcmL, found in Thermosynechococcus vestitus (strain NIES-2133 / IAM M-273 / BP-1).